A 272-amino-acid chain; its full sequence is 2-dehydro-3-deoxyphosphooctonate aldolase (272 aa).

It belongs to the KdsA family.

It is found in the cytoplasm. The enzyme catalyses D-arabinose 5-phosphate + phosphoenolpyruvate + H2O = 3-deoxy-alpha-D-manno-2-octulosonate-8-phosphate + phosphate. Its pathway is carbohydrate biosynthesis; 3-deoxy-D-manno-octulosonate biosynthesis; 3-deoxy-D-manno-octulosonate from D-ribulose 5-phosphate: step 2/3. It participates in bacterial outer membrane biogenesis; lipopolysaccharide biosynthesis. The protein is 2-dehydro-3-deoxyphosphooctonate aldolase of Geotalea daltonii (strain DSM 22248 / JCM 15807 / FRC-32) (Geobacter daltonii).